The chain runs to 252 residues: Carbohydrate deacetylase (252 aa).

The Mg(2+) site is built by H59 and H122.

This sequence belongs to the YdjC deacetylase family. As to quaternary structure, homodimer. Requires Mg(2+) as cofactor.

In terms of biological role, probably catalyzes the deacetylation of acetylated carbohydrates an important step in the degradation of oligosaccharides. The sequence is that of Carbohydrate deacetylase from Vibrio vulnificus (strain YJ016).